The primary structure comprises 378 residues: Histidine decarboxylase (378 aa).

His-120 is a binding site for substrate. The residue at position 233 (Lys-233) is an N6-(pyridoxal phosphate)lysine. Ser-323 is an active-site residue.

The protein belongs to the group II decarboxylase family. In terms of assembly, homotetramer. Pyridoxal 5'-phosphate serves as cofactor.

It carries out the reaction L-histidine + H(+) = histamine + CO2. In Morganella morganii (Proteus morganii), this protein is Histidine decarboxylase (hdc).